Consider the following 115-residue polypeptide: U2-ctenitoxin-Pn1b (115 aa).

A signal peptide spans 1–17 (MKVAVIILSILVLAAAS). Positions 18–61 (ESIEEYREDFSRPNAMERSANDWIPTAPSAVERSADFAVEELER) are excised as a propeptide. Cystine bridges form between cysteine 64/cysteine 78, cysteine 71/cysteine 84, cysteine 75/cysteine 113, cysteine 77/cysteine 98, and cysteine 86/cysteine 96. Residue lysine 115 is a propeptide.

The protein belongs to the neurotoxin 03 (Tx2) family. 04 subfamily. Expressed by the venom gland.

Its subcellular location is the secreted. Blocks voltage-gated sodium channels (Nav). The protein is U2-ctenitoxin-Pn1b of Phoneutria nigriventer (Brazilian armed spider).